The following is a 223-amino-acid chain: MSETAPAETAAPAPVEKSPAKKKTTKKAGAAKRKATGPPVSELITKAVSASKERGGVSLPALKKALAAGGYDVEKNNSRIKLGLKSLVSKGTLVQTKGTGASGSFKLNKKAASGEAKPKAKKTGAAKAKKPAGATPKKPKKTAGAKKTVKKTPKKAKKPAAAGVKKVAKSPKKAKAAAKPKKAAKSPAKPKAVKSKASKPKVTKPKTAKPKAAKAKKAVSKKK.

A compositionally biased stretch (low complexity) spans methionine 1 to proline 14. The interval methionine 1–glycine 56 is disordered. Serine 2 is modified (N-acetylserine). Serine 2 carries the post-translational modification Phosphoserine. Lysine 17 carries the post-translational modification N6-acetyllysine. Phosphoserine is present on serine 18. Over residues alanine 20–alanine 35 the composition is skewed to basic residues. Position 27 is an N6-methyllysine (lysine 27). Lysine 34 is subject to N6-(beta-hydroxybutyryl)lysine; alternate. Lysine 34 carries the post-translational modification N6-succinyllysine; alternate. Position 36 is a phosphothreonine (threonine 36). The region spanning threonine 36–lysine 109 is the H15 domain. Lysine 46 carries the post-translational modification N6-acetyllysine. Lysine 52 is subject to N6-(beta-hydroxybutyryl)lysine. At arginine 54 the chain carries Citrulline. An N6-(beta-hydroxybutyryl)lysine modification is found at lysine 64. Lysine 75 carries the N6-acetyllysine modification. N6-(beta-hydroxybutyryl)lysine is present on residues lysine 85, lysine 90, and lysine 106. Residues glycine 91 to lysine 223 are disordered. The span at lysine 119 to lysine 130 shows a compositional bias: basic residues. Phosphothreonine is present on residues threonine 135 and threonine 152. Residues lysine 137–lysine 158 are compositionally biased toward basic residues. Lysine 165 carries the N6-acetyllysine modification. Basic residues predominate over residues lysine 166–alanine 184. 2 positions are modified to phosphoserine: serine 170 and serine 186. Basic residues predominate over residues lysine 191–lysine 223.

It belongs to the histone H1/H5 family. As to quaternary structure, interacts with MSX1. H1 histones are progressively phosphorylated during the cell cycle, becoming maximally phosphorylated during late G2 phase and M phase, and being dephosphorylated sharply thereafter. In terms of processing, citrullination at Arg-54 (H1R54ci) by PADI4 takes place within the DNA-binding site of H1 and results in its displacement from chromatin and global chromatin decondensation, thereby promoting pluripotency and stem cell maintenance. Post-translationally, hydroxybutyrylation of histones is induced by starvation.

It localises to the nucleus. Its subcellular location is the chromosome. Histone H1 protein binds to linker DNA between nucleosomes forming the macromolecular structure known as the chromatin fiber. Histones H1 are necessary for the condensation of nucleosome chains into higher-order structured fibers. Also acts as a regulator of individual gene transcription through chromatin remodeling, nucleosome spacing and DNA methylation. The chain is Histone H1.5 (H1-5) from Mus musculus (Mouse).